A 396-amino-acid polypeptide reads, in one-letter code: L-lactate dehydrogenase (396 aa).

The 380-residue stretch at M1–G380 folds into the FMN hydroxy acid dehydrogenase domain. Y24 contributes to the substrate binding site. S106 and Q127 together coordinate FMN. Y129 lines the substrate pocket. T155 serves as a coordination point for FMN. Substrate is bound at residue R164. Position 251 (K251) interacts with FMN. Residue H275 is the Proton acceptor of the active site. R278 contacts substrate. D306–R330 contributes to the FMN binding site.

Belongs to the FMN-dependent alpha-hydroxy acid dehydrogenase family. FMN is required as a cofactor.

It localises to the cell inner membrane. The catalysed reaction is (S)-lactate + A = pyruvate + AH2. In terms of biological role, catalyzes the conversion of L-lactate to pyruvate. Is coupled to the respiratory chain. This Escherichia coli O81 (strain ED1a) protein is L-lactate dehydrogenase.